The primary structure comprises 249 residues: MILELDCGNSFIKWRVLDSGSASASAEGVVRSDLALIENLSALPRLLLTRCRLVSVRALEETSKLVEALHEAFGVTVSCAAPAREMAGVRNGYEDFERLGLDRWLAMLGGFKLARGACLVLDFGTAATADFIAADGEHLGGFICPGMPLMRNQLRTHTRKIRYDDAAAERALERLSPGRTTVEAVERGCTLMLRGFVLTQLELARSYWGDDFTVFLTGGDADLVVDAVPQAELVPDLVFVGLAMACPLS.

ATP is bound at residue 6–13 (DCGNSFIK). Residues tyrosine 93 and 100–103 (GLDR) contribute to the substrate site. The Proton acceptor role is filled by aspartate 102. Aspartate 122 lines the K(+) pocket. Residue threonine 125 coordinates ATP. Threonine 181 provides a ligand contact to substrate.

Belongs to the type III pantothenate kinase family. In terms of assembly, homodimer. NH4(+) is required as a cofactor. The cofactor is K(+).

The protein resides in the cytoplasm. It carries out the reaction (R)-pantothenate + ATP = (R)-4'-phosphopantothenate + ADP + H(+). The protein operates within cofactor biosynthesis; coenzyme A biosynthesis; CoA from (R)-pantothenate: step 1/5. Functionally, catalyzes the phosphorylation of pantothenate (Pan), the first step in CoA biosynthesis. The polypeptide is Type III pantothenate kinase (Pseudomonas fluorescens (strain SBW25)).